The chain runs to 119 residues: Small ribosomal subunit protein uS13m (119 aa).

Belongs to the universal ribosomal protein uS13 family. In terms of assembly, part of the small ribosomal subunit.

The protein resides in the mitochondrion. Its function is as follows. Located at the top of the head of the small subunit, it contacts several helices of the small subunit rRNA. The protein is Small ribosomal subunit protein uS13m (RPS13) of Acanthamoeba castellanii (Amoeba).